We begin with the raw amino-acid sequence, 504 residues long: Glycerol kinase (504 aa).

Threonine 14 is a binding site for ADP. The ATP site is built by threonine 14, threonine 15, and serine 16. Threonine 14 contributes to the sn-glycerol 3-phosphate binding site. Arginine 18 contributes to the ADP binding site. Positions 84, 85, 136, and 246 each coordinate sn-glycerol 3-phosphate. Residues arginine 84, glutamate 85, tyrosine 136, aspartate 246, and glutamine 247 each coordinate glycerol. Residues threonine 268 and glycine 311 each contribute to the ADP site. Threonine 268, glycine 311, glutamine 315, and glycine 412 together coordinate ATP. Residues glycine 412 and asparagine 416 each coordinate ADP.

It belongs to the FGGY kinase family.

The enzyme catalyses glycerol + ATP = sn-glycerol 3-phosphate + ADP + H(+). It functions in the pathway polyol metabolism; glycerol degradation via glycerol kinase pathway; sn-glycerol 3-phosphate from glycerol: step 1/1. With respect to regulation, inhibited by fructose 1,6-bisphosphate (FBP). In terms of biological role, key enzyme in the regulation of glycerol uptake and metabolism. Catalyzes the phosphorylation of glycerol to yield sn-glycerol 3-phosphate. This chain is Glycerol kinase, found in Aliivibrio fischeri (strain MJ11) (Vibrio fischeri).